Consider the following 245-residue polypeptide: 1-(5-phosphoribosyl)-5-[(5-phosphoribosylamino)methylideneamino] imidazole-4-carboxamide isomerase (245 aa).

The active-site Proton acceptor is aspartate 7. The active-site Proton donor is the aspartate 129.

It belongs to the HisA/HisF family.

It is found in the cytoplasm. The enzyme catalyses 1-(5-phospho-beta-D-ribosyl)-5-[(5-phospho-beta-D-ribosylamino)methylideneamino]imidazole-4-carboxamide = 5-[(5-phospho-1-deoxy-D-ribulos-1-ylimino)methylamino]-1-(5-phospho-beta-D-ribosyl)imidazole-4-carboxamide. Its pathway is amino-acid biosynthesis; L-histidine biosynthesis; L-histidine from 5-phospho-alpha-D-ribose 1-diphosphate: step 4/9. This is 1-(5-phosphoribosyl)-5-[(5-phosphoribosylamino)methylideneamino] imidazole-4-carboxamide isomerase from Salmonella agona (strain SL483).